The chain runs to 37 residues: Large ribosomal subunit protein bL36c (37 aa).

The protein belongs to the bacterial ribosomal protein bL36 family.

The protein localises to the plastid. It localises to the chloroplast. This is Large ribosomal subunit protein bL36c from Gnetum parvifolium (Small-leaved jointfir).